Here is a 39-residue protein sequence, read N- to C-terminus: Cytochrome b559 subunit beta (39 aa).

Residues 14–30 (WLAIHGLAVPTVSFLGS) traverse the membrane as a helical segment. His18 contacts heme.

It belongs to the PsbE/PsbF family. Heterodimer of an alpha subunit and a beta subunit. PSII is composed of 1 copy each of membrane proteins PsbA, PsbB, PsbC, PsbD, PsbE, PsbF, PsbH, PsbI, PsbJ, PsbK, PsbL, PsbM, PsbT, PsbX, PsbY, PsbZ, Psb30/Ycf12, at least 3 peripheral proteins of the oxygen-evolving complex and a large number of cofactors. It forms dimeric complexes. Heme b serves as cofactor.

The protein localises to the plastid. Its subcellular location is the chloroplast thylakoid membrane. Its function is as follows. This b-type cytochrome is tightly associated with the reaction center of photosystem II (PSII). PSII is a light-driven water:plastoquinone oxidoreductase that uses light energy to abstract electrons from H(2)O, generating O(2) and a proton gradient subsequently used for ATP formation. It consists of a core antenna complex that captures photons, and an electron transfer chain that converts photonic excitation into a charge separation. The protein is Cytochrome b559 subunit beta of Allium textile (Textile onion).